Reading from the N-terminus, the 633-residue chain is Probable potassium transport system protein Kup (633 aa).

12 consecutive transmembrane segments (helical) span residues 19–39 (LGML…SPLY), 61–81 (ILAL…VLFI), 112–132 (VLVI…MITP), 148–168 (SGLE…LFLI), 179–199 (LFGP…INGI), 217–237 (FFIV…LALT), 258–278 (WFAL…ALLL), 290–310 (LLAP…ATVI), 348–368 (IYIG…VLGF), 380–400 (VAVT…MLLL), 405–425 (PVLA…FFAA), and 430–450 (IFQG…LMTT).

Belongs to the HAK/KUP transporter (TC 2.A.72) family.

It is found in the cell inner membrane. It catalyses the reaction K(+)(in) + H(+)(in) = K(+)(out) + H(+)(out). Transport of potassium into the cell. Likely operates as a K(+):H(+) symporter. This is Probable potassium transport system protein Kup from Pseudomonas fluorescens (strain ATCC BAA-477 / NRRL B-23932 / Pf-5).